A 191-amino-acid polypeptide reads, in one-letter code: UPF0149 protein VS_2635 (191 aa).

The protein belongs to the UPF0149 family.

The chain is UPF0149 protein VS_2635 from Vibrio atlanticus (strain LGP32) (Vibrio splendidus (strain Mel32)).